Here is a 139-residue protein sequence, read N- to C-terminus: Small ribosomal subunit protein uS9 (139 aa).

This sequence belongs to the universal ribosomal protein uS9 family.

This Coxiella burnetii (strain CbuK_Q154) (Coxiella burnetii (strain Q154)) protein is Small ribosomal subunit protein uS9.